Consider the following 1018-residue polypeptide: Isoleucine--tRNA ligase (1018 aa).

Residues 43-53 (PYTTGRIHLGT) carry the 'HIGH' region motif. Positions 586-590 (KMSKS) match the 'KMSKS' region motif. Position 589 (Lys589) interacts with ATP.

The protein belongs to the class-I aminoacyl-tRNA synthetase family. IleS type 2 subfamily. As to quaternary structure, monomer. It depends on Zn(2+) as a cofactor.

Its subcellular location is the cytoplasm. The enzyme catalyses tRNA(Ile) + L-isoleucine + ATP = L-isoleucyl-tRNA(Ile) + AMP + diphosphate. Catalyzes the attachment of isoleucine to tRNA(Ile). As IleRS can inadvertently accommodate and process structurally similar amino acids such as valine, to avoid such errors it has two additional distinct tRNA(Ile)-dependent editing activities. One activity is designated as 'pretransfer' editing and involves the hydrolysis of activated Val-AMP. The other activity is designated 'posttransfer' editing and involves deacylation of mischarged Val-tRNA(Ile). The sequence is that of Isoleucine--tRNA ligase from Archaeoglobus fulgidus (strain ATCC 49558 / DSM 4304 / JCM 9628 / NBRC 100126 / VC-16).